The chain runs to 188 residues: dCTP deaminase (188 aa).

Residues 111 to 116, 135 to 137, glutamine 156, tyrosine 170, and glutamine 180 each bind dCTP; these read KSTYAR and TLE. The Proton donor/acceptor role is filled by glutamate 137.

It belongs to the dCTP deaminase family. As to quaternary structure, homotrimer.

It carries out the reaction dCTP + H2O + H(+) = dUTP + NH4(+). It functions in the pathway pyrimidine metabolism; dUMP biosynthesis; dUMP from dCTP (dUTP route): step 1/2. Functionally, catalyzes the deamination of dCTP to dUTP. This is dCTP deaminase from Neisseria gonorrhoeae (strain ATCC 700825 / FA 1090).